The following is a 265-amino-acid chain: Indole-3-glycerol phosphate synthase (265 aa).

The protein belongs to the TrpC family.

The catalysed reaction is 1-(2-carboxyphenylamino)-1-deoxy-D-ribulose 5-phosphate + H(+) = (1S,2R)-1-C-(indol-3-yl)glycerol 3-phosphate + CO2 + H2O. It participates in amino-acid biosynthesis; L-tryptophan biosynthesis; L-tryptophan from chorismate: step 4/5. This chain is Indole-3-glycerol phosphate synthase, found in Chromobacterium violaceum (strain ATCC 12472 / DSM 30191 / JCM 1249 / CCUG 213 / NBRC 12614 / NCIMB 9131 / NCTC 9757 / MK).